The sequence spans 187 residues: Elongation factor P (187 aa).

The protein belongs to the elongation factor P family.

The protein localises to the cytoplasm. The protein operates within protein biosynthesis; polypeptide chain elongation. Its function is as follows. Involved in peptide bond synthesis. Stimulates efficient translation and peptide-bond synthesis on native or reconstituted 70S ribosomes in vitro. Probably functions indirectly by altering the affinity of the ribosome for aminoacyl-tRNA, thus increasing their reactivity as acceptors for peptidyl transferase. In Leifsonia xyli subsp. xyli (strain CTCB07), this protein is Elongation factor P.